The following is a 125-amino-acid chain: Large ribosomal subunit protein bL12 (125 aa).

This sequence belongs to the bacterial ribosomal protein bL12 family. As to quaternary structure, homodimer. Part of the ribosomal stalk of the 50S ribosomal subunit. Forms a multimeric L10(L12)X complex, where L10 forms an elongated spine to which 2 to 4 L12 dimers bind in a sequential fashion. Binds GTP-bound translation factors.

Its function is as follows. Forms part of the ribosomal stalk which helps the ribosome interact with GTP-bound translation factors. Is thus essential for accurate translation. The chain is Large ribosomal subunit protein bL12 from Alkalilimnicola ehrlichii (strain ATCC BAA-1101 / DSM 17681 / MLHE-1).